The primary structure comprises 55 residues: Preprotein translocase subunit SecG (55 aa).

Residues 1-29 (MAKKSGSGLQSSAGLMRYYEADKNAVQVQ) lie on the Cytoplasmic side of the membrane. Residues 30–51 (PKVVLIVGAIVGIAVLFLSAVN) form a helical membrane-spanning segment. Residues 52–55 (GFWP) lie on the Extracellular side of the membrane.

It belongs to the SEC61-beta family. Component of the protein translocase complex. Heterotrimer consisting of alpha (SecY), beta (SecG) and gamma (SecE) subunits. Can form oligomers of the heterotrimer.

The protein localises to the cell membrane. Involved in protein export. The function of the beta subunit is unknown, but it may be involved in stabilization of the trimeric complex. The chain is Preprotein translocase subunit SecG from Methanosarcina barkeri (strain Fusaro / DSM 804).